The primary structure comprises 259 residues: Trypsin (259 aa).

An N-terminal signal peptide occupies residues 1–32 (MKHFLRALKRCSVAVATVAIAVVGLQPVTASA). Positions 33–36 (APNP) are cleaved as a propeptide — activation peptide. Residues 37–257 (VVGGTRAAQG…FASAIASAAR (221 aa)) form the Peptidase S1 domain. A disulfide bridge links Cys58 with Cys74. Active-site charge relay system residues include His73 and Asp118. 2 cysteine pairs are disulfide-bonded: Cys177–Cys192 and Cys204–Cys233. Catalysis depends on Ser208, which acts as the Charge relay system.

The protein belongs to the peptidase S1 family.

The enzyme catalyses Preferential cleavage: Arg-|-Xaa, Lys-|-Xaa.. This Streptomyces griseus protein is Trypsin (sprT).